We begin with the raw amino-acid sequence, 242 residues long: Orotidine 5'-phosphate decarboxylase (242 aa).

Substrate is bound by residues Asp22, Lys44, 71 to 80 (DLKYHDIPNT), Thr130, Arg190, Gln199, Gly219, and Arg220. Lys73 functions as the Proton donor in the catalytic mechanism.

Belongs to the OMP decarboxylase family. Type 1 subfamily. As to quaternary structure, homodimer.

It catalyses the reaction orotidine 5'-phosphate + H(+) = UMP + CO2. It participates in pyrimidine metabolism; UMP biosynthesis via de novo pathway; UMP from orotate: step 2/2. Functionally, catalyzes the decarboxylation of orotidine 5'-monophosphate (OMP) to uridine 5'-monophosphate (UMP). This chain is Orotidine 5'-phosphate decarboxylase, found in Laribacter hongkongensis (strain HLHK9).